The sequence spans 99 residues: Acylphosphatase (99 aa).

The region spanning 5–97 is the Acylphosphatase-like domain; that stretch reads IRQVMISGRV…QPGERFSILS (93 aa). Residues arginine 20 and asparagine 38 contribute to the active site.

The protein belongs to the acylphosphatase family.

The enzyme catalyses an acyl phosphate + H2O = a carboxylate + phosphate + H(+). This Rhodopseudomonas palustris (strain ATCC BAA-98 / CGA009) protein is Acylphosphatase (acyP).